The sequence spans 129 residues: Protein Turandot B1 (129 aa).

An N-terminal signal peptide occupies residues 1-21 (MNSATSLMCFALLLISPLCMG).

This sequence belongs to the Turandot family.

Its subcellular location is the secreted. In terms of biological role, a humoral factor that may play a role in stress tolerance. This is Protein Turandot B1 (TotB1) from Drosophila erecta (Fruit fly).